The sequence spans 123 residues: Large ribosomal subunit protein uL14 (123 aa).

It belongs to the universal ribosomal protein uL14 family. As to quaternary structure, part of the 50S ribosomal subunit. Forms a cluster with proteins L3 and L19. In the 70S ribosome, L14 and L19 interact and together make contacts with the 16S rRNA in bridges B5 and B8.

Binds to 23S rRNA. Forms part of two intersubunit bridges in the 70S ribosome. The polypeptide is Large ribosomal subunit protein uL14 (Koribacter versatilis (strain Ellin345)).